We begin with the raw amino-acid sequence, 91 residues long: Gem-associated protein 7 homolog (91 aa).

The region spanning 18–86 (LKFYQKMASA…VVGIEYNLVQ (69 aa)) is the Sm domain.

The protein belongs to the gemin-7 family. As to quaternary structure, part of the core SMN complex at least composed of smn1, yip11/gem2, gem6, gem7 and gem8. Interacts with gem6; the interaction is direct. Interacts with gem8; the interaction is direct.

This chain is Gem-associated protein 7 homolog, found in Schizosaccharomyces pombe (strain 972 / ATCC 24843) (Fission yeast).